The chain runs to 67 residues: Penaeidin-4c (67 aa).

The signal sequence occupies residues Met1–Gly19. 3 disulfide bridges follow: Cys42–Cys56, Cys45–Cys63, and Cys57–Cys64. The residue at position 66 (Arg66) is an Arginine amide.

This sequence belongs to the penaeidin family.

It localises to the cytoplasmic granule. Antibacterial and antifungal activity. Presents chitin-binding activity. In Penaeus vannamei (Whiteleg shrimp), this protein is Penaeidin-4c.